A 198-amino-acid polypeptide reads, in one-letter code: Na(+)-translocating NADH-quinone reductase subunit E (198 aa).

6 consecutive transmembrane segments (helical) span residues 11-31 (SIFIENMALSFFLGMCTFLAV), 39-59 (FGLGVAVVVVLTIAVPVNNLV), 77-97 (FLNFITFIGVIAALVQILEMV), 110-130 (GIFLPLITVNCAIFGGVSFMV), 140-160 (IVYGFGSGVGWMLAIVALAGI), and 176-196 (LGITFITVGLMALGFMSFSGV).

The protein belongs to the NqrDE/RnfAE family. Composed of six subunits; NqrA, NqrB, NqrC, NqrD, NqrE and NqrF. Post-translationally, the N-terminus is blocked.

The protein resides in the cell inner membrane. It carries out the reaction a ubiquinone + n Na(+)(in) + NADH + H(+) = a ubiquinol + n Na(+)(out) + NAD(+). Its activity is regulated as follows. This reaction is tightly coupled to the Na(+) pumping activity and specifically requires Na(+) for activity. Inhibited by korormicin and 2-N-heptyl-4-hydroxyquinoline N-oxide (HQNO). In terms of biological role, NQR complex catalyzes the reduction of ubiquinone-1 to ubiquinol by two successive reactions, coupled with the transport of Na(+) ions from the cytoplasm to the periplasm. NqrA to NqrE are probably involved in the second step, the conversion of ubisemiquinone to ubiquinol. The chain is Na(+)-translocating NADH-quinone reductase subunit E from Vibrio alginolyticus.